The sequence spans 680 residues: Potassium-transporting ATPase ATP-binding subunit (680 aa).

The next 4 helical transmembrane spans lie at 37 to 57 (VIFV…LDVA), 69 to 89 (IAAW…VAEG), 223 to 243 (ILLS…WGLA), and 257 to 277 (ALLV…IGIA). The active-site 4-aspartylphosphate intermediate is Asp307. Residues Asp344, Glu348, 375–382 (FTAETRLS), and Lys393 each bind ATP. Residues Asp516 and Asp520 each coordinate Mg(2+). A run of 3 helical transmembrane segments spans residues 586–606 (FAII…LNIM), 614–634 (AILS…PLAL), and 652–672 (LLVY…LIDL).

Belongs to the cation transport ATPase (P-type) (TC 3.A.3) family. Type IA subfamily. In terms of assembly, the system is composed of three essential subunits: KdpA, KdpB and KdpC.

It localises to the cell inner membrane. It carries out the reaction K(+)(out) + ATP + H2O = K(+)(in) + ADP + phosphate + H(+). In terms of biological role, part of the high-affinity ATP-driven potassium transport (or Kdp) system, which catalyzes the hydrolysis of ATP coupled with the electrogenic transport of potassium into the cytoplasm. This subunit is responsible for energy coupling to the transport system and for the release of the potassium ions to the cytoplasm. The chain is Potassium-transporting ATPase ATP-binding subunit from Rhizobium meliloti (strain 1021) (Ensifer meliloti).